A 212-amino-acid polypeptide reads, in one-letter code: Small ribosomal subunit protein uS2 (212 aa).

A disordered region spans residues 190 to 212; it reads LSPDAPEDQPAPVSEFETKVKMV.

This sequence belongs to the universal ribosomal protein uS2 family.

This is Small ribosomal subunit protein uS2 from Ignicoccus hospitalis (strain KIN4/I / DSM 18386 / JCM 14125).